Consider the following 23-residue polypeptide: Cardioactive peptide CAP23 (23 aa).

C7 and C19 are oxidised to a cystine.

Belongs to the GBP/PSP1/paralytic peptide family.

Has excitatory effects on a semi-isolated heart from larval Manduca sexta, causing an inotropic effect at low concentrations of peptide and chronotropic and inotropic effects at high doses. The protein is Cardioactive peptide CAP23 of Spodoptera eridania (Southern armyworm).